The primary structure comprises 253 residues: ATP synthase subunit b 2 (253 aa).

The chain crosses the membrane as a helical span at residues 9-27; sequence VLEIVNFLVLVWLLKRFLY.

This sequence belongs to the ATPase B chain family. F-type ATPases have 2 components, F(1) - the catalytic core - and F(0) - the membrane proton channel. F(1) has five subunits: alpha(3), beta(3), gamma(1), delta(1), epsilon(1). F(0) has three main subunits: a(1), b(2) and c(10-14). The alpha and beta chains form an alternating ring which encloses part of the gamma chain. F(1) is attached to F(0) by a central stalk formed by the gamma and epsilon chains, while a peripheral stalk is formed by the delta and b chains.

It localises to the cell inner membrane. Functionally, f(1)F(0) ATP synthase produces ATP from ADP in the presence of a proton or sodium gradient. F-type ATPases consist of two structural domains, F(1) containing the extramembraneous catalytic core and F(0) containing the membrane proton channel, linked together by a central stalk and a peripheral stalk. During catalysis, ATP synthesis in the catalytic domain of F(1) is coupled via a rotary mechanism of the central stalk subunits to proton translocation. In terms of biological role, component of the F(0) channel, it forms part of the peripheral stalk, linking F(1) to F(0). This is ATP synthase subunit b 2 from Methylococcus capsulatus (strain ATCC 33009 / NCIMB 11132 / Bath).